We begin with the raw amino-acid sequence, 139 residues long: Putative nickel-responsive regulator (139 aa).

H79, H90, H92, and C98 together coordinate Ni(2+).

It belongs to the transcriptional regulatory CopG/NikR family. The cofactor is Ni(2+).

Functionally, transcriptional regulator. The protein is Putative nickel-responsive regulator of Geotalea uraniireducens (strain Rf4) (Geobacter uraniireducens).